The following is a 216-amino-acid chain: ATP-dependent Clp protease proteolytic subunit (216 aa).

The active-site Nucleophile is the Ser101. Residue His126 is part of the active site.

Belongs to the peptidase S14 family. In terms of assembly, component of the chloroplastic Clp protease core complex.

It is found in the plastid. It localises to the chloroplast stroma. The catalysed reaction is Hydrolysis of proteins to small peptides in the presence of ATP and magnesium. alpha-casein is the usual test substrate. In the absence of ATP, only oligopeptides shorter than five residues are hydrolyzed (such as succinyl-Leu-Tyr-|-NHMec, and Leu-Tyr-Leu-|-Tyr-Trp, in which cleavage of the -Tyr-|-Leu- and -Tyr-|-Trp bonds also occurs).. Functionally, cleaves peptides in various proteins in a process that requires ATP hydrolysis. Has a chymotrypsin-like activity. Plays a major role in the degradation of misfolded proteins. The chain is ATP-dependent Clp protease proteolytic subunit from Triticum aestivum (Wheat).